Here is a 959-residue protein sequence, read N- to C-terminus: Translation initiation factor IF-2 (959 aa).

Over residues 1–10 (MSDKTNDDKT) the composition is skewed to basic and acidic residues. The segment at 1–374 (MSDKTNDDKT…SQMQETREKI (374 aa)) is disordered. Residues 27 to 37 (EQSTVRQNFSH) show a composition bias toward polar residues. Composition is skewed to low complexity over residues 63–118 (AAAA…VTKP) and 128–138 (QRPGGQQAQRP). 2 stretches are compositionally biased toward basic and acidic residues: residues 154–225 (SEMD…EAAK) and 232–241 (ARSERRDDAR). Residues 246 to 284 (GARPQQAGRPQGGRPQPAGRPQQGSPRPAPIIADAAPIA) are compositionally biased toward low complexity. Positions 318-333 (PEVRAPKVVKGEDDRR) are enriched in basic and acidic residues. Residues 457–626 (SRPPVVTIMG…LLQAEMLDLK (170 aa)) form the tr-type G domain. The interval 466–473 (GHVDHGKT) is G1. Residue 466-473 (GHVDHGKT) participates in GTP binding. The segment at 491-495 (GITQH) is G2. The G3 stretch occupies residues 512-515 (DTPG). GTP contacts are provided by residues 512-516 (DTPGH) and 566-569 (NKID). The G4 stretch occupies residues 566 to 569 (NKID). Residues 602-604 (SAK) form a G5 region.

The protein belongs to the TRAFAC class translation factor GTPase superfamily. Classic translation factor GTPase family. IF-2 subfamily.

It localises to the cytoplasm. Its function is as follows. One of the essential components for the initiation of protein synthesis. Protects formylmethionyl-tRNA from spontaneous hydrolysis and promotes its binding to the 30S ribosomal subunits. Also involved in the hydrolysis of GTP during the formation of the 70S ribosomal complex. This is Translation initiation factor IF-2 from Brucella suis biovar 1 (strain 1330).